Reading from the N-terminus, the 224-residue chain is Endonuclease NucS (224 aa).

The protein belongs to the NucS endonuclease family.

Its subcellular location is the cytoplasm. Its function is as follows. Cleaves both 3' and 5' ssDNA extremities of branched DNA structures. This Rhodococcus jostii (strain RHA1) protein is Endonuclease NucS.